The chain runs to 444 residues: Trigger factor (444 aa).

Positions 166–251 (GDQIVIDFKG…VKAVKAPKAA (86 aa)) constitute a PPIase FKBP-type domain.

This sequence belongs to the FKBP-type PPIase family. Tig subfamily.

The protein localises to the cytoplasm. It carries out the reaction [protein]-peptidylproline (omega=180) = [protein]-peptidylproline (omega=0). In terms of biological role, involved in protein export. Acts as a chaperone by maintaining the newly synthesized protein in an open conformation. Functions as a peptidyl-prolyl cis-trans isomerase. This is Trigger factor from Paracoccus denitrificans (strain Pd 1222).